We begin with the raw amino-acid sequence, 269 residues long: Formamidopyrimidine-DNA glycosylase (269 aa).

The active-site Schiff-base intermediate with DNA is Pro-2. The active-site Proton donor is Glu-3. Catalysis depends on Lys-57, which acts as the Proton donor; for beta-elimination activity. DNA is bound by residues His-90, Arg-109, and Lys-150. An FPG-type zinc finger spans residues 235–269; the sequence is QVYGKAGEPCPECGEAIQEQKIGQRNTFYCSYCQC. Catalysis depends on Arg-259, which acts as the Proton donor; for delta-elimination activity.

The protein belongs to the FPG family. Monomer. It depends on Zn(2+) as a cofactor.

It carries out the reaction Hydrolysis of DNA containing ring-opened 7-methylguanine residues, releasing 2,6-diamino-4-hydroxy-5-(N-methyl)formamidopyrimidine.. It catalyses the reaction 2'-deoxyribonucleotide-(2'-deoxyribose 5'-phosphate)-2'-deoxyribonucleotide-DNA = a 3'-end 2'-deoxyribonucleotide-(2,3-dehydro-2,3-deoxyribose 5'-phosphate)-DNA + a 5'-end 5'-phospho-2'-deoxyribonucleoside-DNA + H(+). Functionally, involved in base excision repair of DNA damaged by oxidation or by mutagenic agents. Acts as a DNA glycosylase that recognizes and removes damaged bases. Has a preference for oxidized purines, such as 7,8-dihydro-8-oxoguanine (8-oxoG). Has AP (apurinic/apyrimidinic) lyase activity and introduces nicks in the DNA strand. Cleaves the DNA backbone by beta-delta elimination to generate a single-strand break at the site of the removed base with both 3'- and 5'-phosphates. The chain is Formamidopyrimidine-DNA glycosylase from Vibrio vulnificus (strain CMCP6).